The sequence spans 380 residues: Flap endonuclease 1 (380 aa).

Residues 1 to 105 (MGIKGLAQVL…GELAKRVARH (105 aa)) are N-domain. Asp-34 contacts Mg(2+). 2 residues coordinate DNA: Arg-47 and Arg-71. 5 residues coordinate Mg(2+): Asp-87, Glu-159, Glu-161, Asp-180, and Asp-182. The I-domain stretch occupies residues 123-254 (MVDRFAKRTV…ARAVELIRQY (132 aa)). Residue Glu-159 participates in DNA binding. Positions 232 and 234 each coordinate DNA. Asp-234 provides a ligand contact to Mg(2+). Positions 337–345 (PQGRLDSFF) are interaction with PCNA. The segment at 340-380 (RLDSFFKPVPSSPKKPVDTKSKGSAKRKRDSNKGGESKKKR) is disordered. Low complexity predominate over residues 342 to 353 (DSFFKPVPSSPK). Ser-350 and Ser-351 each carry phosphoserine. The span at 370 to 380 (SNKGGESKKKR) shows a compositional bias: basic and acidic residues.

Belongs to the XPG/RAD2 endonuclease family. FEN1 subfamily. In terms of assembly, interacts with PCNA. Three molecules of rad2 bind to one PCNA trimer with each molecule binding to one PCNA monomer. PCNA stimulates the nuclease activity without altering cleavage specificity. The cofactor is Mg(2+). Phosphorylated. Phosphorylation upon DNA damage induces relocalization to the nuclear plasma.

The protein localises to the nucleus. The protein resides in the nucleolus. It localises to the nucleoplasm. It is found in the mitochondrion. Its function is as follows. Structure-specific nuclease with 5'-flap endonuclease and 5'-3' exonuclease activities involved in DNA replication and repair. During DNA replication, cleaves the 5'-overhanging flap structure that is generated by displacement synthesis when DNA polymerase encounters the 5'-end of a downstream Okazaki fragment. It enters the flap from the 5'-end and then tracks to cleave the flap base, leaving a nick for ligation. Also involved in the long patch base excision repair (LP-BER) pathway, by cleaving within the apurinic/apyrimidinic (AP) site-terminated flap. Acts as a genome stabilization factor that prevents flaps from equilibrating into structures that lead to duplications and deletions. Also possesses 5'-3' exonuclease activity on nicked or gapped double-stranded DNA, and exhibits RNase H activity. Also involved in replication and repair of rDNA and in repairing mitochondrial DNA. The chain is Flap endonuclease 1 from Schizosaccharomyces pombe (strain 972 / ATCC 24843) (Fission yeast).